The following is a 151-amino-acid chain: MSLGGGGGGGAMEQIQQQLQALEQEKQAIQAEIENVRDEQSEIDEAIEAIETLETGATVQVPLGGDAYVRATIEDMDEVVVTLGGGYAAERDSEGAVESLERKKETLDDRIEELEGEIETVEEETASLEEKAQQAQQQQMQQLQQMQQEDE.

A disordered region spans residues 120 to 151; the sequence is TVEEETASLEEKAQQAQQQQMQQLQQMQQEDE. Low complexity predominate over residues 133–151; that stretch reads QQAQQQQMQQLQQMQQEDE.

This sequence belongs to the prefoldin subunit alpha family. As to quaternary structure, heterohexamer of two alpha and four beta subunits.

The protein localises to the cytoplasm. Its function is as follows. Molecular chaperone capable of stabilizing a range of proteins. Seems to fulfill an ATP-independent, HSP70-like function in archaeal de novo protein folding. The protein is Prefoldin subunit alpha of Natronomonas pharaonis (strain ATCC 35678 / DSM 2160 / CIP 103997 / JCM 8858 / NBRC 14720 / NCIMB 2260 / Gabara) (Halobacterium pharaonis).